Reading from the N-terminus, the 427-residue chain is UPF0229 protein YeaH (427 aa).

Residues 79-90 are compositionally biased toward basic and acidic residues; the sequence is NDHFIQNDRIER. A disordered region spans residues 79-110; sequence NDHFIQNDRIERPQGGGGGSGSGQGQASQDGE. The span at 92–102 shows a compositional bias: gly residues; it reads QGGGGGSGSGQ.

The protein belongs to the UPF0229 family.

This chain is UPF0229 protein YeaH, found in Salmonella paratyphi B (strain ATCC BAA-1250 / SPB7).